The chain runs to 334 residues: Malate dehydrogenase (334 aa).

17–23 serves as a coordination point for NAD(+); that stretch reads GAAGQIG. Substrate contacts are provided by Arg98 and Arg104. NAD(+)-binding positions include Asn111, Gln118, and 135–137; that span reads VGN. 2 residues coordinate substrate: Asn137 and Arg168. His193 (proton acceptor) is an active-site residue.

Belongs to the LDH/MDH superfamily. MDH type 2 family.

It catalyses the reaction (S)-malate + NAD(+) = oxaloacetate + NADH + H(+). Its function is as follows. Catalyzes the reversible oxidation of malate to oxaloacetate. The chain is Malate dehydrogenase from Deinococcus geothermalis (strain DSM 11300 / CIP 105573 / AG-3a).